Reading from the N-terminus, the 83-residue chain is Retinal cone rhodopsin-sensitive cGMP 3',5'-cyclic phosphodiesterase subunit gamma (83 aa).

Residues 1–51 are disordered; it reads MSDSPCLSPPAPSQGPTTPRKGPPKFKQRQTRQFKSKPPKKGVKGFGDDIP. Basic residues predominate over residues 22–43; it reads GPPKFKQRQTRQFKSKPPKKGV.

Belongs to the rod/cone cGMP-PDE gamma subunit family. Tetramer composed of two catalytic chains (alpha and beta), and two inhibitory chains (gamma).

The enzyme catalyses 3',5'-cyclic GMP + H2O = GMP + H(+). In terms of biological role, participates in processes of transmission and amplification of the visual signal. cGMP-PDEs are the effector molecules in G-protein-mediated phototransduction in vertebrate rods and cones. This Rattus norvegicus (Rat) protein is Retinal cone rhodopsin-sensitive cGMP 3',5'-cyclic phosphodiesterase subunit gamma (Pde6h).